The primary structure comprises 1152 residues: Calcium-activated potassium channel subunit alpha-1 (1152 aa).

The interval 1–37 is disordered; the sequence is MSSNIHANHLSLDASSSSSSSSSSSSSSSSSSSSVHE. The Extracellular portion of the chain corresponds to 1–60; sequence MSSNIHANHLSLDASSSSSSSSSSSSSSSSSSSSVHEPKMDALIIPVTMEVPCDSRGQRM. Over residues 15–34 the composition is skewed to low complexity; it reads SSSSSSSSSSSSSSSSSSSS. A helical membrane pass occupies residues 61 to 81; sequence WWAFLASSMVTFFGGLFIILL. The Cytoplasmic portion of the chain corresponds to 82 to 152; the sequence is WRTLKYLWTV…MISAQTLTGR (71 aa). S-palmitoyl cysteine attachment occurs at residues cysteine 92, cysteine 93, and cysteine 95. Residues 153-173 form a helical membrane-spanning segment; the sequence is VLVVLVFALSIGALVIYFIDS. Residues 174–188 lie on the Extracellular side of the membrane; the sequence is SNPIESCQNFYKDFT. A helical membrane pass occupies residues 189–209; it reads LQIDMAFNVFFLLYFGLRFIA. Residues 210-213 are Cytoplasmic-facing; it reads ANDK. Residues 214-234 traverse the membrane as a helical segment; it reads LWFWLEVNSVVDFFTVPPVFV. The Extracellular segment spans residues 235-238; it reads SVYL. A helical; Voltage-sensor membrane pass occupies residues 239–259; that stretch reads NRSWLGLRFLRALRLIQFSEI. The Cytoplasmic portion of the chain corresponds to 260–274; the sequence is LQFLNILKTSNSIKL. A helical transmembrane segment spans residues 275-295; it reads VNLLSIFISTWLTAAGFIHLV. Residues 296–309 lie on the Extracellular side of the membrane; sequence ENSGDPWENFQNNQ. Residues 310-332 constitute an intramembrane region (pore-forming); that stretch reads ALTYWECVYLLMVTMSTVGYGDV. The Selectivity for potassium signature appears at 326–329; it reads TVGY. Topologically, residues 333–341 are extracellular; sequence YAKTTLGRL. The chain crosses the membrane as a helical span at residues 342–362; it reads FMVFFILGGLAMFASYVPEII. The Cytoplasmic portion of the chain corresponds to 363–1152; the sequence is ELIGNRKKYG…KQKYVQEERL (790 aa). Positions 381–523 constitute an RCK N-terminal 1 domain; it reads RKHIVVCGHI…WNWKEGDDAI (143 aa). Positions 413, 436, and 438 each coordinate Mg(2+). The segment S7 stretch occupies residues 530–550; that stretch reads LGFIAQSCLAQGLSTMLANLF. Positions 587–607 are segment S8; sequence LSFPTVCELCFVKLKLLMIAI. The segment at 651–655 is heme-binding motif; sequence CKACH. The interval 675–703 is disordered; that stretch reads EQPSTLSPKKKQRNGGMRNSPSSSPKLMR. At threonine 679 the chain carries Phosphothreonine. Residues serine 681, serine 694, and serine 698 each carry the phosphoserine modification. The segment S9 stretch occupies residues 753–773; sequence VLSGHVVVCIFGDVSSALIGL. In terms of domain architecture, RCK N-terminal 2 spans 755–899; that stretch reads SGHVVVCIFG…MDRSSPDNSP (145 aa). Threonine 886 carries the phosphothreonine modification. Phosphoserine occurs at positions 894 and 898. A Calcium bowl motif is present at residues 919–941; sequence TELVNDTNVQFLDQDDDDDPDTE. Positions 928, 931, 934, and 936 each coordinate Ca(2+). The interval 948–968 is segment S10; the sequence is FACGTAFAVSVLDSLMSATYF. Residues 1102–1127 are compositionally biased toward low complexity; the sequence is RASLSHSSHSSQSSSKKSSSVHSIPS. Residues 1102-1152 are disordered; the sequence is RASLSHSSHSSQSSSKKSSSVHSIPSTANRQNRPKSRESRDKQKYVQEERL. Positions 1136–1152 are enriched in basic and acidic residues; sequence KSRESRDKQKYVQEERL. Phosphoserine is present on residues serine 1137 and serine 1140.

It belongs to the potassium channel family. Calcium-activated (TC 1.A.1.3) subfamily. KCa1.1/KCNMA1 sub-subfamily. As to quaternary structure, homotetramer; which constitutes the calcium-activated potassium channel. Interacts with beta subunits KCNMB1, KCNMB2, KCNMB3 and KCNMB4. Interacts with gamma subunits LRRC26, LRRC38, LRRC52 and LRRC55. Beta and gamma subunits are accessory, and modulate its activity. Interacts with RAB11B. Phosphorylated. Phosphorylation by kinases such as PKA and/or PKG. In smooth muscles, phosphorylation affects its activity. Post-translationally, palmitoylation by ZDHHC22 and ZDHHC23 within the intracellular linker between the S0 and S1 transmembrane domains regulates localization to the plasma membrane. Depalmitoylated by LYPLA1 and LYPLAL1, leading to retard exit from the trans-Golgi network.

The protein localises to the cell membrane. The catalysed reaction is K(+)(in) = K(+)(out). With respect to regulation, ethanol and carbon monoxide-bound heme increase channel activation. Heme inhibits channel activation. Its function is as follows. Potassium channel activated by both membrane depolarization or increase in cytosolic Ca(2+) that mediates export of K(+). It is also activated by the concentration of cytosolic Mg(2+). Its activation dampens the excitatory events that elevate the cytosolic Ca(2+) concentration and/or depolarize the cell membrane. It therefore contributes to repolarization of the membrane potential. Plays a key role in controlling excitability in a number of systems, such as regulation of the contraction of smooth muscle, the tuning of hair cells in the cochlea, regulation of transmitter release, and innate immunity. In smooth muscles, its activation by high level of Ca(2+), caused by ryanodine receptors in the sarcoplasmic reticulum, regulates the membrane potential. In cochlea cells, its number and kinetic properties partly determine the characteristic frequency of each hair cell and thereby helps to establish a tonotopic map. Kinetics of KCNMA1 channels are determined by alternative splicing, phosphorylation status and its combination with modulating beta subunits. Highly sensitive to both iberiotoxin (IbTx) and charybdotoxin (CTX). This chain is Calcium-activated potassium channel subunit alpha-1 (KCNMA1), found in Sus scrofa (Pig).